Here is a 78-residue protein sequence, read N- to C-terminus: Small ribosomal subunit protein bS18 (78 aa).

It belongs to the bacterial ribosomal protein bS18 family. Part of the 30S ribosomal subunit. Forms a tight heterodimer with protein bS6.

Its function is as follows. Binds as a heterodimer with protein bS6 to the central domain of the 16S rRNA, where it helps stabilize the platform of the 30S subunit. The protein is Small ribosomal subunit protein bS18 of Alkaliphilus oremlandii (strain OhILAs) (Clostridium oremlandii (strain OhILAs)).